The following is a 431-amino-acid chain: Glutamate--tRNA ligase 1 (431 aa).

A 'HIGH' region motif is present at residues 6–16 (PSPTGDMHIGN). The short motif at 235–239 (KMSKR) is the 'KMSKS' region element. Position 238 (lysine 238) interacts with ATP.

The protein belongs to the class-I aminoacyl-tRNA synthetase family. Glutamate--tRNA ligase type 1 subfamily. In terms of assembly, monomer.

Its subcellular location is the cytoplasm. It catalyses the reaction tRNA(Glu) + L-glutamate + ATP = L-glutamyl-tRNA(Glu) + AMP + diphosphate. In terms of biological role, catalyzes the attachment of glutamate to tRNA(Glu) in a two-step reaction: glutamate is first activated by ATP to form Glu-AMP and then transferred to the acceptor end of tRNA(Glu). The polypeptide is Glutamate--tRNA ligase 1 (Nitratiruptor sp. (strain SB155-2)).